The sequence spans 3926 residues: MGAPNSTREPIAIVGTACRFPGGANTPSKLWDLLCEKRDVQTRIPPERFNPDAFYHRNGEKSGCTDVKKAYLLTEDIRAFDASFFKINPREAEAMDPQQRLLLETVYEATEAAGLPYEDLKGSNTAVYVGSMTGDYHEMLLRDPQDMPKYMATGTARSILSNRVSYFFDWKGPSMTIDTACSSSLVAVHEAVTALRLGVSNIACAAGTNLILGPEMMISESKLHMLSPTGRSKMWDASANGYARGEGTAAIMMKTLSQALSDGDHVYGIIRETGVNSDGHTNGITLPSSESQKTLIRQTYANAGLDLIKERCQFFEAHGTGTPAGDPIEARAIHEAFFEDAAGSSDQMFVGSVKTAIGHLEGCAGLAGLIKALEAVRRGVIPPNQLFENLNPALKPFAGNLSIPTETLPWPEVAPGTPRRASVNSFGFGGTNAHAIIESFDNTPQPAPTGGIISYPLVLSANSEKSLRRQISQLHDTLQNAGEGEVQDTLYTLAQRRSQLPARTYFSGHTQEELLKKLSAASAEDATITVASQEVTNQNSRILGVFTGQGAQWPTMGREILKSSAFAGDLITRLETSLASLQEPPTWTLSEQILADPESSRLGEAAVSQPVCTAVQLMLVELLRQAGITFSTVIGHSSGEIAAAYAAGFLTPEDAIRIAYCRGVCAKLAGGEEGQKGSMMAVGLSYEEAACFCEDHFPGCIDVAASNAPSSATLSGDKDAILEAKALLDEQGTFARVLKVDTAYHSRHMQPCAEPYMALLRESNIQLLPGDDSCEWFSSVIGERMSSFTHGQLLTGEYWVENMVKPVLFTLASELAADSKLPCHVALEVGPHPALKGPFSQTYKRATGSQLPYQGALTRNVHDVEALSDALGFIWARLGKSAVNFASHAELFSVSKTSFSTNLPSYPWDHSQSFWKESRKSANFRQRTSPPHPLLGTRSTEDATQDLRWLNILHLDDAPWLEGHKVEGLVVYPAAAYLVMAMESAKSIDETKTIQLVELFDVQILSAIQLSQDSQGVETLFTLEIDDVNSTAATARWSLFTSMVGRGSNWKCNAKGHLRVDFGSEAQDSLLPSRDPPVASLTSVNIERFYTSLAEIGLGYTGAFKHLATVQRQSGFATAKASQMNTDFSAMIHPALLDSAFQSLFAAYCWPDDGSLAAPFVPTFFKSLRIVSLDHIENGQELTIDSYLTDTNDREITADLDIFTSDSEKPLLQLQGLTCTSLLRPGPSNAKELYTQTKWEVDISCAVASLDVQQHDAAEDLDLVDLCERLSYYYLRELNRKVDRSEVPAMDWHFQRIFEWIDYLFPIIEAGKHTTIRKEWSADEGSWLLEQASKFPGQVDLLLIRAVGENLTEVVRKETTMLEHMVRNDVLNRFYKFGLGFQRANGYLSRISKQIAHRYPQMKILEIGAGTGGATKGILESLGTTFESYTFTDISTGFFEAAAEAFEPWVSKIIFKPLNVENDPVEQGFLEAQYDFIVASNVLHATKSLSTTMRNVRRLLKPGGQLLLLEVTSDIVRVRLMMSGLSGWWLGGDDGRRYAPTITVPEWDSLLRSTGFSGVDHTVNDFYDPSKYMTSVMLSQAVDDHHVDILRKPLNSALGWLPQRCITIIGGKNNEIAQQVSKTLLSMKSASLDLINHVDSFEQLASTPELPLRAVLILEDLDEPVLKSLTSEKLAGLQRTINDSRQILWVSKGCQKDEPYANMSTGLCRSLASEYPHIQLQHIDMETGLDSLAVSRIVEALIRIVYKASLKQDDDLLWSHEAELILEDEGRWLIPRILPDDKLNDHLNAGKMKVKTNASLADTPVEIQQAGSQWVISQTVPSLPISDNTDHIRIKASYSTLHAVRVRGSRVYLSYGHRVTGSTTPVIAFSETAGSIISVPESQVFDVPQGFDIDQSASLRSLVLTAIVESVLAECDHGAAIIVHEADNYLGAAFETKCREIGLKLVRTTSKSDHKDDAIFIHPLAPERVVKKALPHVEVAVVVDLSGRDYSVVDSPLRRHVPSTTKFLELSDLIGSVTCGLRDVNIQCVQDAIESSFKSPSDGPVVNISEVSGLQASETSYATVVDWSIEKPVSVQVQPLQANRLLRSDRTYLLAGCTGGLGKALCRWMVAAGVRHLALTTRNVEAIDKVWLEGLQLQGADVRLFQVDVGDKAALERAHAQVTAEMPPICGVANAAMVLSDRSFGELKVGDFDKVFGPKVRGTQNLHELFQDEPLDFFIMFSSLASVVGNRGQANYAAANLFMTAVAEQRRAKNLAASVIHIGMILGVGYVSSTGAYEATLRQYNYMPISEPDFLNMFSEAILVGQPGSSHAPELITGLNRYSLQEDAPKFFWHENMRFSHHTLEEQHQESTSTTKASISQRLAQVQTPAEMLEVVEEEFCTKLERMLQAESGTIKVSQPLMSLGVDSLIAAEIRSWFFKELDVDMPVLEILNTASVAEICSTAVASLATLAPQEQTETTTLVTSEAVQSLNAVSGNGSSSSRAPTEFNSSTLKSGAQSTQGTSVSGDKDTNSVDGSAKVERNGPLSFAQERIWFLQQYLQDATTFNVTMAYRITGPLRVNDLESAFQKVIQRHESLRTGFHMDPETTVPTQIVYEQSPFGLEQRNDSDITKEFEELQNTHYDLENGRVLKAIVLTKPDTDEHILLVGFHHIALDGFSAQILVRDLAIAYAGGNLAPLDKGYLDFAVDQRAAVYPAETLQYWKTEFETLPPALPVFDFAETKTRLPLTDYKTRVSERTLQPDVAGKAKSAARALAATPFHVYLAALQVLLSDFASTQDVCIGITDANKNDAAHMDTIGFFVNLLPLRFQLSASQTLAELVSNTKAKANGALTHSRLPFDVLLDELKIPRSTSHSPLFQVVLNFKMGSTQKVPLADCQAEVIDFKDVNNPYDLAFDIETYPDGSTSISVKSQEYLYTKNELDLILESYINLLSLFEKDSSKTLGEVSQCTPDEAQKTLTLGRGERIPSPSFDTLSHYFEDWVKRQPDAIAIRDDQGTTLSYSQLKSFVNNIAATLEKSGLTPGARVGVYCEPSIFIIASLLAIAEVGGVYVPLDPQNPIKRLQLIVDDCEPEILLFDESTKELAPKLQTNASLINIYNVRRLPSSAAITNRAQGAGMAYMFYTSGTTGVPKGVALTHANLVHHIDSITHFYDIKRGTMLQQAPLGFDMSLTQMSLSTMLGGTLVVASSEARKDPLQLAKLMLSERVTHTFMTPTLAVALIHHGYEYLVKCVGWEFSLLSGEAFRTHVISEFQRLGLPQLKLFNGYGPTEITINSSSGLNELDLAAPRDTRNPTIGFTLPNYSCYILDEDLKPVRPGHAGELFVGGAGIAVGYLRRDELNKERFLSDPFASSEDVARGWARMYRTGDKAKFLPDGRIVFLGRIAGDSQIKLRGFRIELEDIANTIVKSSGGVVSEAAVSFRQGVNGPDDGAFLVAFAIISQAHRPENPSSFLKQLLKDLSLPRYMIPAKIVQVEHLPMGPTGKLDQNALDVMPIPQDENVHEETLTTTQERLRALWFESLPAVAPDAFIGSETDFFEAGGNSLRIVMLREHIAREFGVMVSVFDLFQASTLGGMAAKIDGSTGADNQPIIWEEETRVDIPSGLETPDEPAILDGDELEVALTGATGFLGLAILRSLLKDERISRVHCLAVRSPSKARDEVFKSPRVVVYHGDLSSPRLGLSEDEFGTLSKKFDIIIHNGAEVSFLKSYQALKKANVSSTKELAQLASGRQIPFHFVSTGGVVNLTDHDGLPEISVSGFKPPIDGTEGYAASKWASEVILESHAERAHLPVWIHRPANVTGAAAPATDLMGSILQYSTTMQSLPEISNWKGSFDFVPVEQVADEIAASIHESRSSEPVYRHHCGDQKISVSELSAHLEAGIGAKMEIIGVDDWLARARSTGIDETTALLVEKMLSGENGGTVPWLRKGE.

In terms of domain architecture, Ketosynthase family 3 (KS3) spans 8–439 (REPIAIVGTA…GTNAHAIIES (432 aa)). Residues C181, H318, and H359 each act as for beta-ketoacyl synthase activity in the active site. The interval 545-863 (VFTGQGAQWP…QGALTRNVHD (319 aa)) is malonyl-CoA:ACP transacylase (MAT) domain. The interval 932–1065 (HPLLGTRSTE…GHLRVDFGSE (134 aa)) is N-terminal hotdog fold. The interval 932–1225 (HPLLGTRSTE…GLTCTSLLRP (294 aa)) is dehydratase (DH) domain. The 297-residue stretch at 932–1228 (HPLLGTRSTE…CTSLLRPGPS (297 aa)) folds into the PKS/mFAS DH domain. Catalysis depends on H964, which acts as the Proton acceptor; for dehydratase activity. The interval 1081–1228 (LTSVNIERFY…CTSLLRPGPS (148 aa)) is C-terminal hotdog fold. The active-site Proton donor; for dehydratase activity is the D1138. Residues 1344 to 1572 (IRAVGENLTE…VNDFYDPSKY (229 aa)) form a C-methyltransferase (CMeT) domain region. The segment at 2091–2265 (TYLLAGCTGG…AASVIHIGMI (175 aa)) is ketoreductase (KR) domain 1. The region spanning 2371-2448 (EMLEVVEEEF…EICSTAVASL (78 aa)) is the Carrier 1 domain. Residue S2408 is modified to O-(pantetheine 4'-phosphoryl)serine. Positions 2474–2506 (VSGNGSSSSRAPTEFNSSTLKSGAQSTQGTSVS) are enriched in polar residues. Positions 2474 to 2518 (VSGNGSSSSRAPTEFNSSTLKSGAQSTQGTSVSGDKDTNSVDGSA) are disordered. The segment covering 2507–2518 (GDKDTNSVDGSA) has biased composition (basic and acidic residues). Residues 2525 to 2810 (PLSFAQERIW…VNLLPLRFQL (286 aa)) are condensation. Positions 2979–3389 (DWVKRQPDAI…RIAGDSQIKL (411 aa)) are adenylation. The 80-residue stretch at 3501–3580 (ETLTTTQERL…GMAAKIDGST (80 aa)) folds into the Carrier 2 domain. Position 3540 is an O-(pantetheine 4'-phosphoryl)serine (S3540). The tract at residues 3619–3840 (LTGATGFLGL…DFVPVEQVAD (222 aa)) is thiolester reductase (TE) domain.

This sequence in the C-terminal section; belongs to the NRP synthetase family.

Its pathway is mycotoxin biosynthesis. Functionally, hybrid PKS-NRPS synthetase; part of the gene cluster that mediates the biosynthesis of the mycotoxin lucilactaene and the lucilactaene-related compound NG-391 that act as cell cycle inhibitors with potent growth inhibitory activity against malarial parasites, moderate growth inhibitory activity against cancer cells, and no activity against bacteria and fungi. The hybrid PKS-NRPS synthetase LUC5 is responsible for the condensation of one acetyl-coenzyme A (CoA) unit with six malonyl-CoA units and the amide linkage of the arising heptaketide and homoserine, subsequently releasing the first intermediate prelucilactaene B, as an alcohol with an open ring structure. Lucilactaene and NG-391 lack the 7-methyl group present in fusarins which is inserted in fusarins by the C-methyltransferase (CMeT) domain of the fusarin synthetase FUS1, suggesting that the CMet domain of LUC5 does not methylate this position. Within the pathway, both the cytochrome P450 monooxygenase LUC2 and the hydrolase LUC6 function in parallel in modification of prelucilactaene B. LUC6 may catalyze the 2-pyrrolidone ring formation to form prelucilactaene C from prelucilactaene B, followed by C-15 hydroxylation by the same enzyme to give prelucilactaene D, which is then converted to prelucilactaene E by epoxidation, and finally to prelucilactaene F by cyclization. Prelucilactane D, prelucilactaene E, and prelucilactaene F can be converted to dihydrolucilactaene, NG391, and lucilactaene, respectively, via C-20 methyl group hydroxylation by the cytochrome P450 monooxygenase LUC2. However, LUC2, unlike FUS8 in fusarin C biosynthesis, is not enough for the full oxidation of the C-20 methyl group into carboxylic acid, which is a prerequisite for the final methylation step. The aldehyde dehydrogenase LUC3 is involved in the biosynthesis by further oxidation of the C-20 alcoholic analog prelucilactaene G into a carboxylic derivative. This unidentified carboxylic derivative may be converted to demethyllucilactaene. As the last step, the methyltransferase LUC1 methylates the hydroxyl group at C-21 of demethyllucilactaene to generate lucilactaene. The chain is Hybrid PKS-NRPS synthetase LUC5 from Fusarium sp.